The sequence spans 455 residues: Bifunctional protein GlmU (455 aa).

The tract at residues 1-227 is pyrophosphorylase; sequence MGLSVIILAA…CEEVQGVNDR (227 aa). Residues 8-11, K22, Q73, 78-79, 100-102, G137, E152, N167, and N225 contribute to the UDP-N-acetyl-alpha-D-glucosamine site; these read LAAG, GT, and YGD. Position 102 (D102) interacts with Mg(2+). Residue N225 coordinates Mg(2+). A linker region spans residues 228–248; that stretch reads WELTKLERYYQRLMAKKLSLA. Residues 249-455 form an N-acetyltransferase region; it reads GVTIIDPERF…KGWHRPTKKE (207 aa). UDP-N-acetyl-alpha-D-glucosamine is bound by residues R332 and K350. The active-site Proton acceptor is H362. Positions 365 and 376 each coordinate UDP-N-acetyl-alpha-D-glucosamine. Acetyl-CoA contacts are provided by residues A379, 385–386, S404, A422, and R439; that span reads NY.

This sequence in the N-terminal section; belongs to the N-acetylglucosamine-1-phosphate uridyltransferase family. In the C-terminal section; belongs to the transferase hexapeptide repeat family. As to quaternary structure, homotrimer. Mg(2+) serves as cofactor.

It localises to the cytoplasm. The enzyme catalyses alpha-D-glucosamine 1-phosphate + acetyl-CoA = N-acetyl-alpha-D-glucosamine 1-phosphate + CoA + H(+). The catalysed reaction is N-acetyl-alpha-D-glucosamine 1-phosphate + UTP + H(+) = UDP-N-acetyl-alpha-D-glucosamine + diphosphate. Its pathway is nucleotide-sugar biosynthesis; UDP-N-acetyl-alpha-D-glucosamine biosynthesis; N-acetyl-alpha-D-glucosamine 1-phosphate from alpha-D-glucosamine 6-phosphate (route II): step 2/2. The protein operates within nucleotide-sugar biosynthesis; UDP-N-acetyl-alpha-D-glucosamine biosynthesis; UDP-N-acetyl-alpha-D-glucosamine from N-acetyl-alpha-D-glucosamine 1-phosphate: step 1/1. It participates in bacterial outer membrane biogenesis; LPS lipid A biosynthesis. Functionally, catalyzes the last two sequential reactions in the de novo biosynthetic pathway for UDP-N-acetylglucosamine (UDP-GlcNAc). The C-terminal domain catalyzes the transfer of acetyl group from acetyl coenzyme A to glucosamine-1-phosphate (GlcN-1-P) to produce N-acetylglucosamine-1-phosphate (GlcNAc-1-P), which is converted into UDP-GlcNAc by the transfer of uridine 5-monophosphate (from uridine 5-triphosphate), a reaction catalyzed by the N-terminal domain. The chain is Bifunctional protein GlmU from Coxiella burnetii (strain CbuG_Q212) (Coxiella burnetii (strain Q212)).